The primary structure comprises 356 residues: Deoxyribonuclease-2-beta (356 aa).

The N-terminal stretch at 1–22 is a signal peptide; sequence MTAQPLKAALPLLFVALSGVLG. Asn-77, Asn-98, Asn-114, and Asn-273 each carry an N-linked (GlcNAc...) asparagine glycan.

This sequence belongs to the DNase II family. Liver specific.

The protein resides in the lysosome. The enzyme catalyses Endonucleolytic cleavage to nucleoside 3'-phosphates and 3'-phosphooligonucleotide end-products.. Hydrolyzes DNA under acidic conditions. Does not require divalent cations for activity. Participates in the degradation of nuclear DNA during lens cell differentiation. The sequence is that of Deoxyribonuclease-2-beta (Dnase2b) from Rattus norvegicus (Rat).